A 1358-amino-acid polypeptide reads, in one-letter code: Phosphoinositide 3-kinase regulatory subunit 4 (1358 aa).

The N-myristoyl glycine moiety is linked to residue glycine 2. Residues 26–324 (FEYDKSLGST…AFPEVFYTFL (299 aa)) enclose the Protein kinase domain. ATP contacts are provided by residues 32-40 (LGSTRFFKV) and lysine 53. The active-site Proton acceptor is the aspartate 148. HEAT repeat units lie at residues 413-450 (ILLDRITPYLLHFSNNSVPRVRAEALRTLTKVLALVQE), 458-495 (IYPEYILPGIAHLAQDDATIVRLAYAENIALLAETALR), 572-610 (KANDVLLSHMITFLNDKNDWHLRGAFFDSIVGVAAYVGW), and 612-648 (SSSILKPLLQQGLSDAEEFVIVKALNALTCMCQLGLL). 4 positions are modified to phosphoserine: serine 808, serine 813, serine 853, and serine 865. The tract at residues 875-899 (LPKTSDHEVVPTGKSPRSESSAGVC) is disordered. WD repeat units follow at residues 991-1030 (EHKSAVNRIRVSDEHLLFATCSNDGTVKIWNSQKMEGKTT), 1040-1079 (RIGGRVKTLTFCQGSHYLAIASDNGAVQLLGIEASKLPKS), 1093-1134 (KEDG…NAWT), 1139-1178 (LKSGLITSFAVDIHQCWLCIGTSSGAMACWDMRFQLPISS), 1182-1223 (PSRA…RRLT), and 1237-1278 (PSPH…RSYV). A disordered region spans residues 1307 to 1326 (KQKVGPSDDTPRRGPESLPV). A compositionally biased stretch (basic and acidic residues) spans 1315 to 1326 (DTPRRGPESLPV). Threonine 1316 is modified (phosphothreonine). The WD 7 repeat unit spans residues 1327-1358 (GHHDIITDIATFQTTQGFIVTASRDGIVKVWK).

Belongs to the protein kinase superfamily. Ser/Thr protein kinase family. In terms of assembly, component of the PI3K (PI3KC3/PI3K-III/class III phosphatidylinositol 3-kinase) complex the core of which is composed of the catalytic subunit PIK3C3, the regulatory subunit PIK3R4 and BECN1 associating with additional regulatory/auxiliary subunits to form alternative complex forms. Alternative complex forms containing a fourth regulatory subunit in a mutually exclusive manner are PI3K complex I (PI3KC3-C1) containing ATG14, and PI3K complex II (PI3KC3-C2) containing UVRAG. PI3KC3-C1 displays a V-shaped architecture with PIK3R4 serving as a bridge between PIK3C3 and the ATG14:BECN1 subcomplex. Both, PI3KC3-C1 and PI3KC3-C2, can associate with further regulatory subunits, such as RUBCN, SH3GLB1/Bif-1, AMBRA1 and NRBF2. PI3KC3-C1 probably associates with PIK3CB. Interacts with RAB7A in the presence of PIK3C3/VPS34. Interacts with NRBF2. Interacts with ARMC3. It depends on Mn(2+) as a cofactor. Post-translationally, myristoylated. In terms of processing, probably autophosphorylated.

It localises to the late endosome. Its subcellular location is the cytoplasmic vesicle. It is found in the autophagosome. The protein resides in the membrane. It carries out the reaction L-seryl-[protein] + ATP = O-phospho-L-seryl-[protein] + ADP + H(+). The catalysed reaction is L-threonyl-[protein] + ATP = O-phospho-L-threonyl-[protein] + ADP + H(+). Its function is as follows. Regulatory subunit of the PI3K complex that mediates formation of phosphatidylinositol 3-phosphate; different complex forms are believed to play a role in multiple membrane trafficking pathways: PI3KC3-C1 is involved in initiation of autophagosomes and PI3KC3-C2 in maturation of autophagosomes and endocytosis. Involved in regulation of degradative endocytic trafficking and cytokinesis, probably in the context of PI3KC3-C2. The sequence is that of Phosphoinositide 3-kinase regulatory subunit 4 (Pik3r4) from Rattus norvegicus (Rat).